The following is a 110-amino-acid chain: Ribonuclease P protein component 1 (110 aa).

The protein belongs to the eukaryotic/archaeal RNase P protein component 1 family. Consists of a catalytic RNA component and at least 4-5 protein subunits.

It localises to the cytoplasm. The catalysed reaction is Endonucleolytic cleavage of RNA, removing 5'-extranucleotides from tRNA precursor.. In terms of biological role, part of ribonuclease P, a protein complex that generates mature tRNA molecules by cleaving their 5'-ends. This chain is Ribonuclease P protein component 1, found in Methanosarcina barkeri (strain Fusaro / DSM 804).